A 330-amino-acid chain; its full sequence is Lipoyl synthase (330 aa).

Residues Cys77, Cys82, Cys88, Cys103, Cys107, Cys110, and Ser317 each coordinate [4Fe-4S] cluster. The region spanning 89–306 (FNHGTATFMI…RSEAEKMGFE (218 aa)) is the Radical SAM core domain.

It belongs to the radical SAM superfamily. Lipoyl synthase family. Requires [4Fe-4S] cluster as cofactor.

It is found in the cytoplasm. The enzyme catalyses [[Fe-S] cluster scaffold protein carrying a second [4Fe-4S](2+) cluster] + N(6)-octanoyl-L-lysyl-[protein] + 2 oxidized [2Fe-2S]-[ferredoxin] + 2 S-adenosyl-L-methionine + 4 H(+) = [[Fe-S] cluster scaffold protein] + N(6)-[(R)-dihydrolipoyl]-L-lysyl-[protein] + 4 Fe(3+) + 2 hydrogen sulfide + 2 5'-deoxyadenosine + 2 L-methionine + 2 reduced [2Fe-2S]-[ferredoxin]. It functions in the pathway protein modification; protein lipoylation via endogenous pathway; protein N(6)-(lipoyl)lysine from octanoyl-[acyl-carrier-protein]: step 2/2. Functionally, catalyzes the radical-mediated insertion of two sulfur atoms into the C-6 and C-8 positions of the octanoyl moiety bound to the lipoyl domains of lipoate-dependent enzymes, thereby converting the octanoylated domains into lipoylated derivatives. This is Lipoyl synthase from Haemophilus ducreyi (strain 35000HP / ATCC 700724).